A 271-amino-acid chain; its full sequence is Proteasome inhibitor PI31 subunit (271 aa).

Ala-2 carries the post-translational modification N-acetylalanine. The segment at 2–150 is important for homodimerization and interaction with FBXO7; sequence AGLEVLFASA…PIHEQWEKAR (149 aa). Phosphoserine occurs at positions 153 and 189. An Omega-N-methylarginine modification is found at Arg-205. Asymmetric dimethylarginine is present on Arg-219. Residues 226 to 271 form a disordered region; that stretch reads SGLPNRLPPGAVPPGARFDPFGPIGTSPSGPNPDHLPPPGYDDMYL. At Arg-231 the chain carries Omega-N-methylarginine. A Phosphoserine modification is found at Ser-252. Over residues 255-265 the composition is skewed to pro residues; it reads GPNPDHLPPPG.

This sequence belongs to the proteasome inhibitor PI31 family. In terms of assembly, monomer and homodimer. Interacts with FBXO7.

Its subcellular location is the cytoplasm. The protein resides in the endoplasmic reticulum. Its function is as follows. Plays an important role in control of proteasome function. Inhibits the hydrolysis of protein and peptide substrates by the 20S proteasome. Also inhibits the activation of the proteasome by the proteasome regulatory proteins PA700 and PA28. In Mus musculus (Mouse), this protein is Proteasome inhibitor PI31 subunit (Psmf1).